Here is a 141-residue protein sequence, read N- to C-terminus: Large ribosomal subunit protein uL11 (141 aa).

It belongs to the universal ribosomal protein uL11 family. Part of the ribosomal stalk of the 50S ribosomal subunit. Interacts with L10 and the large rRNA to form the base of the stalk. L10 forms an elongated spine to which L12 dimers bind in a sequential fashion forming a multimeric L10(L12)X complex. In terms of processing, one or more lysine residues are methylated.

Functionally, forms part of the ribosomal stalk which helps the ribosome interact with GTP-bound translation factors. This is Large ribosomal subunit protein uL11 from Lactococcus lactis subsp. cremoris (strain MG1363).